The following is a 211-amino-acid chain: Protein-methionine-sulfoxide reductase heme-binding subunit MsrQ (211 aa).

4 helical membrane passes run 10-30 (WLKV…VWAI), 82-102 (LWCF…ELGV), 116-136 (PYLT…FTST), and 153-173 (FVYL…KIIS).

Belongs to the MsrQ family. Heterodimer of a catalytic subunit (MsrP) and a heme-binding subunit (MsrQ). The cofactor is FMN. Heme b serves as cofactor.

The protein resides in the cell inner membrane. In terms of biological role, part of the MsrPQ system that repairs oxidized periplasmic proteins containing methionine sulfoxide residues (Met-O), using respiratory chain electrons. Thus protects these proteins from oxidative-stress damage caused by reactive species of oxygen and chlorine generated by the host defense mechanisms. MsrPQ is essential for the maintenance of envelope integrity under bleach stress, rescuing a wide series of structurally unrelated periplasmic proteins from methionine oxidation, including the primary periplasmic chaperone SurA and the lipoprotein Pal. MsrQ provides electrons for reduction to the reductase catalytic subunit MsrP, using the quinone pool of the respiratory chain. This Shigella dysenteriae serotype 1 (strain Sd197) protein is Protein-methionine-sulfoxide reductase heme-binding subunit MsrQ.